Consider the following 276-residue polypeptide: Large ribosomal subunit protein uL2 (276 aa).

A disordered region spans residues 203-276; sequence NVSSGKAGRT…SDKFIVKRRK (74 aa). Over residues 210 to 220 the composition is skewed to basic residues; that stretch reads GRTRWLGRRPQ. Residues 265 to 276 are compositionally biased toward basic and acidic residues; the sequence is KPSDKFIVKRRK.

This sequence belongs to the universal ribosomal protein uL2 family. In terms of assembly, part of the 50S ribosomal subunit. Forms a bridge to the 30S subunit in the 70S ribosome.

In terms of biological role, one of the primary rRNA binding proteins. Required for association of the 30S and 50S subunits to form the 70S ribosome, for tRNA binding and peptide bond formation. It has been suggested to have peptidyltransferase activity; this is somewhat controversial. Makes several contacts with the 16S rRNA in the 70S ribosome. This Coprothermobacter proteolyticus (strain ATCC 35245 / DSM 5265 / OCM 4 / BT) protein is Large ribosomal subunit protein uL2.